A 92-amino-acid chain; its full sequence is uncharacterized protein (92 aa).

This is an uncharacterized protein from Mycobacterium tuberculosis (strain CDC 1551 / Oshkosh).